A 337-amino-acid polypeptide reads, in one-letter code: Primase homolog protein (337 aa).

The region spanning 205–304 (SEIIIVEGEP…WLVKWPKKSE (100 aa)) is the Toprim domain. Residues glutamate 211, aspartate 273, and aspartate 275 each contribute to the Mg(2+) site.

Mg(2+) serves as cofactor.

Its function is as follows. May act as a DNA primase. This Arabidopsis thaliana (Mouse-ear cress) protein is Primase homolog protein.